The following is a 395-amino-acid chain: Innexin inx3 (395 aa).

The Cytoplasmic segment spans residues 1–37; sequence MAVFGMVSAVSGFIKIRYLLDKAVIDNMVFRCHYRIT. Residues 38-58 traverse the membrane as a helical segment; that stretch reads TAILFTCCIIVTANNLIGDPI. The Extracellular segment spans residues 59–114; the sequence is SCINDGAIPMHVINTFCWITYTYTIPGQQHRQIGTDVAGPGLGNEYGQEKRYHSYY. A helical transmembrane segment spans residues 115–135; it reads QWVPFVLFFQGLMFYVPHWVW. The Cytoplasmic portion of the chain corresponds to 136 to 183; sequence KNMEDGKIRMITDGLRGMVSVPDDYRRDRQDRILKYFVNSLNTHNGYS. The chain crosses the membrane as a helical span at residues 184 to 204; that stretch reads FAYFFCELLNFINVIVNIFMV. At 205–272 the chain is on the extracellular side; the sequence is DKFLGGAFMS…VLALNILNEK (68 aa). The helical transmembrane segment at 273–293 threads the bilayer; the sequence is IYIFLWFWFIILATISGVAVL. At 294 to 395 the chain is on the cytoplasmic side; it reads YSLVVIMMPT…TFGGGKETET (102 aa). A phosphoserine mark is found at S366 and S377. The residue at position 381 (Y381) is a Phosphotyrosine.

This sequence belongs to the pannexin family. As to quaternary structure, heterooligomer of Inx2 (via cytoplasmic C-terminal region) and Inx3 (via cytoplasmic C-terminal region). In ovary, expressed in nurse cells and follicle cells. Expressed in embryonic epithelial cells. Ubiquitously expressed in stage 5 embryos. Expressed in foregut and hindgut from stage 11-17 and in proventriculus, epidermis and CNS in stage 16 embryos (at protein level). Expressed in anterior and ventral regions in stage 8 embryos. Repeating epidermal pattern emerges at stage 11, refines to one or two cells at each side of the segment borders by stage 13. Expressed in the imaginal wing disk. In pupae, expressed in the CNS and in secondary and tertiary pigment cells of the retina.

It is found in the cell membrane. The protein localises to the cell junction. It localises to the gap junction. The protein resides in the cytoplasm. Its subcellular location is the lateral cell membrane. It is found in the apicolateral cell membrane. Its function is as follows. Structural components of the gap junctions. Essential for proper epithelial development of the epidermis. This is Innexin inx3 (Inx3) from Drosophila melanogaster (Fruit fly).